Consider the following 411-residue polypeptide: Kelch domain-containing protein 10 (411 aa).

6 Kelch repeats span residues 72–133 (NLYV…LHGH), 135–186 (LLVF…IIHG), 187–239 (FLYV…HDGQ), 240–288 (RIYV…RRCH), 296–342 (EVFI…AVTP), and 345–388 (CMYI…YFPH).

The protein belongs to the KLHDC10 family. In terms of assembly, component of a CRL2 E3 ubiquitin-protein ligase complex, also named ECS (Elongin BC-CUL2/5-SOCS-box protein) complex, composed of CUL2, Elongin BC (ELOB and ELOC), RBX1 and substrate-specific adapter KLHDC10.

Its pathway is protein modification; protein ubiquitination. Its function is as follows. Substrate-recognition component of a Cul2-RING (CRL2) E3 ubiquitin-protein ligase complex of the DesCEND (destruction via C-end degrons) pathway, which recognizes a C-degron located at the extreme C terminus of target proteins, leading to their ubiquitination and degradation. The C-degron recognized by the DesCEND pathway is usually a motif of less than ten residues and can be present in full-length proteins, truncated proteins or proteolytically cleaved forms. The CRL2(KLHDC10) complex specifically recognizes proteins with a proline-glycine (Pro-Gly) or an alanine tail (CAT tail) at the C-terminus, leading to their ubiquitination and degradation. The CRL2(KLHDC10) complex is involved in the ribosome-associated quality control (RQC) pathway, which mediates the extraction of incompletely synthesized nascent chains from stalled ribosomes: CRL2(KLHDC10) acts downstream of NEMF and recognizes CAT tails associated with stalled nascent chains, leading to their ubiquitination and degradation. The protein is Kelch domain-containing protein 10 of Xenopus tropicalis (Western clawed frog).